The chain runs to 100 residues: Nucleoid-associated protein Rcas_2292 (100 aa).

It belongs to the YbaB/EbfC family. Homodimer.

Its subcellular location is the cytoplasm. It localises to the nucleoid. Functionally, binds to DNA and alters its conformation. May be involved in regulation of gene expression, nucleoid organization and DNA protection. This chain is Nucleoid-associated protein Rcas_2292, found in Roseiflexus castenholzii (strain DSM 13941 / HLO8).